The sequence spans 240 residues: Uridylate kinase (240 aa).

13 to 16 (KLSG) serves as a coordination point for ATP. The involved in allosteric activation by GTP stretch occupies residues 21–26 (GDDGFG). Glycine 55 serves as a coordination point for UMP. ATP contacts are provided by glycine 56 and arginine 60. UMP is bound by residues aspartate 75 and 136–143 (IGNPYFST). Residues asparagine 164, tyrosine 170, and aspartate 173 each contribute to the ATP site.

Belongs to the UMP kinase family. As to quaternary structure, homohexamer.

The protein localises to the cytoplasm. The catalysed reaction is UMP + ATP = UDP + ADP. Its pathway is pyrimidine metabolism; CTP biosynthesis via de novo pathway; UDP from UMP (UMPK route): step 1/1. Its activity is regulated as follows. Allosterically activated by GTP. Inhibited by UTP. In terms of biological role, catalyzes the reversible phosphorylation of UMP to UDP. The protein is Uridylate kinase of Staphylococcus saprophyticus subsp. saprophyticus (strain ATCC 15305 / DSM 20229 / NCIMB 8711 / NCTC 7292 / S-41).